The chain runs to 373 residues: Dynein regulatory complex protein 9 (373 aa).

Residues glutamate 145–aspartate 200 adopt a coiled-coil conformation. Residues arginine 336–lysine 365 enclose the IQ domain.

The protein belongs to the DRC9 family. As to quaternary structure, component of the nexin-dynein regulatory complex (N-DRC).

It localises to the cytoplasm. It is found in the cytoskeleton. The protein resides in the flagellum axoneme. Component of the nexin-dynein regulatory complex (N-DRC), a key regulator of ciliary/flagellar motility which maintains the alignment and integrity of the distal axoneme and regulates microtubule sliding in motile axonemes. In Chlamydomonas reinhardtii (Chlamydomonas smithii), this protein is Dynein regulatory complex protein 9.